The primary structure comprises 308 residues: Homeobox protein HMX3 (308 aa).

Disordered stretches follow at residues 1–57 (MPET…GFAL) and 107–184 (AEKS…KKKT). The span at 9-19 (PSAPPPPPPPK) shows a compositional bias: pro residues. 2 stretches are compositionally biased toward basic and acidic residues: residues 135–144 (AEQKERDPKS) and 156–177 (EEGK…PEKK). A DNA-binding region (homeobox) is located at residues 181–240 (KKKTRTVFSRSQVFQLESTFDMKRYLSSSERAGLAASLHLTETQVKIWFQNRRNKWKRQL).

This sequence belongs to the HMX homeobox family.

It is found in the nucleus. Functionally, transcription factor involved in specification of neuronal cell types and which is required for inner ear and hypothalamus development. Binds to the 5'-CAAGTG-3' core sequence. This chain is Homeobox protein HMX3 (HMX3), found in Gallus gallus (Chicken).